We begin with the raw amino-acid sequence, 145 residues long: Cell division protein SepF (145 aa).

Belongs to the SepF family. Homodimer. Interacts with FtsZ.

The protein localises to the cytoplasm. Cell division protein that is part of the divisome complex and is recruited early to the Z-ring. Probably stimulates Z-ring formation, perhaps through the cross-linking of FtsZ protofilaments. Its function overlaps with FtsA. The polypeptide is Cell division protein SepF (Lactobacillus helveticus (strain DPC 4571)).